A 687-amino-acid chain; its full sequence is Ferric vulnibactin receptor VuuA (687 aa).

The first 37 residues, 1-37 (MAALRPARTSVAEKKTFKLHALSAVVMGLCASGQAYA), serve as a signal peptide directing secretion. Positions 63–185 (TIYDTSSSVQ…SAGAIVMKTN (123 aa)) constitute a TBDR plug domain. The region spanning 190–687 (HFESAVKAGV…MIGASLQLNF (498 aa)) is the TBDR beta-barrel domain. The TonB C-terminal box motif lies at 670-687 (EPLKQQPRMIGASLQLNF).

Belongs to the TonB-dependent receptor family.

It localises to the cell outer membrane. Functionally, involved in the uptake of iron in complex with vulnibactin, a catecholate siderophore synthesized by V.vulnificus. Binds and transports ferric vulnibactin across the outer membrane. The energy source is provided by the inner membrane TonB system. The sequence is that of Ferric vulnibactin receptor VuuA from Vibrio vulnificus.